The following is a 914-amino-acid chain: Linoleate 13S-lipoxygenase 3-1, chloroplastic (914 aa).

A chloroplast-targeting transit peptide spans 1–83 (MALAKEIMGI…PEKAVRFKVR (83 aa)). In terms of domain architecture, PLAT spans 96–218 (LKETIVKHLD…DHPGKRIFFS (123 aa)). In terms of domain architecture, Lipoxygenase spans 221–914 (PYLPDETPAG…CRGVPNSVSI (694 aa)). Positions 574, 579, 765, 769, and 914 each coordinate Fe cation.

The protein belongs to the lipoxygenase family. In terms of assembly, monomer. Fe cation is required as a cofactor. As to expression, expressed in roots and leaves. Detected in tubers and flower buds.

It is found in the plastid. Its subcellular location is the chloroplast stroma. The protein resides in the chloroplast thylakoid. It catalyses the reaction (9Z,12Z)-octadecadienoate + O2 = (13S)-hydroperoxy-(9Z,11E)-octadecadienoate. The catalysed reaction is (9Z,12Z,15Z)-octadecatrienoate + O2 = (13S)-hydroperoxy-(9Z,11E,15Z)-octadecatrienoate. It functions in the pathway lipid metabolism; oxylipin biosynthesis. Plant lipoxygenases may be involved in a number of diverse aspects of plant physiology including growth and development, pest resistance, and senescence or responses to wounding. Required for the regulation of wound-induced gene expression, but is not involved in the bulk production of jasmonate upon wounding. Catalyzes the hydroperoxidation of lipids containing a cis,cis-1,4-pentadiene structure. Linolenic acid is the preferred substrate, before linoleic and arachidonic acids. This Solanum tuberosum (Potato) protein is Linoleate 13S-lipoxygenase 3-1, chloroplastic (LOX3.1).